A 492-amino-acid polypeptide reads, in one-letter code: N-succinylglutamate 5-semialdehyde dehydrogenase (492 aa).

220–225 contacts NAD(+); that stretch reads GSANTG. Residues Glu-243 and Cys-277 contribute to the active site.

The protein belongs to the aldehyde dehydrogenase family. AstD subfamily.

The catalysed reaction is N-succinyl-L-glutamate 5-semialdehyde + NAD(+) + H2O = N-succinyl-L-glutamate + NADH + 2 H(+). It participates in amino-acid degradation; L-arginine degradation via AST pathway; L-glutamate and succinate from L-arginine: step 4/5. Functionally, catalyzes the NAD-dependent reduction of succinylglutamate semialdehyde into succinylglutamate. The polypeptide is N-succinylglutamate 5-semialdehyde dehydrogenase (Escherichia coli O127:H6 (strain E2348/69 / EPEC)).